The sequence spans 399 residues: Exodeoxyribonuclease 7 large subunit (399 aa).

This sequence belongs to the XseA family. In terms of assembly, heterooligomer composed of large and small subunits.

It localises to the cytoplasm. The catalysed reaction is Exonucleolytic cleavage in either 5'- to 3'- or 3'- to 5'-direction to yield nucleoside 5'-phosphates.. Bidirectionally degrades single-stranded DNA into large acid-insoluble oligonucleotides, which are then degraded further into small acid-soluble oligonucleotides. The chain is Exodeoxyribonuclease 7 large subunit from Clostridium acetobutylicum (strain ATCC 824 / DSM 792 / JCM 1419 / IAM 19013 / LMG 5710 / NBRC 13948 / NRRL B-527 / VKM B-1787 / 2291 / W).